The chain runs to 931 residues: MSPCGYYSKWRNRDRPEYRRNLRFRRFFSSIHPNAAAGSGFNGPGVFITSVTGVWLCFLCIFSMFVTAVVSVSPSSFYESLQVEPTQSEDITRSAHLGDGDEIREAIHKSQDAETKPTFYVCPPPTGSTIVRLEPPRTCPDYHLGKNFTEGIAVVYKENIAAYKFKATVYYKDVIVSTAWAGSSYTQITNRYADRVPIPVSEITDTIDKFGKCSSKATYVRNNHKVEAFNEDKNPQDMPLIASKYNSVGSKAWHTTNDTYMVAGTPGTYRTGTSVNCIIEEVEARSIFPYDSFGLSTGDIIYMSPFFGLRDGAYREHSNYAMDRFHQFEGYRQRDLDTRALLEPAARNFLVTPHLTVGWNWKPKRTEVCSLVKWREVEDVVRDEYAHNFRFTMKTLSTTFISETNEFNLNQIHLSQCVKEEARAIINRIYTTRYNSSHVRTGDIQTYLARGGFVVVFQPLLSNSLARLYLQELVRENTNHSPQKHPTRNTRSRRSVPVELRANRTITTTSSVEFAMLQFTYDHIQEHVNEMLARISSSWCQLQNRERALWSGLFPINPSALASTILDQRVKARILGDVISVSNCPELGSDTRIILQNSMRVSGSTTRCYSRPLISIVSLNGSGTVEGQLGTDNELIMSRDLLEPCVANHKRYFLFGHHYVYYEDYRYVREIAVHDVGMISTYVDLNLTLLKDREFMPLQVYTRDELRDTGLLDYSEIQRRNQMHSLRFYDIDKVVQYDSGTAIMQGMAQFFQGLGTAGQAVGHVVLGATGALLSTVHGFTTFLSNPFGALAVGLLVLAGLVAAFFAYRYVLKLKTSPMKALYPLTTKGLKQLPEGMDPFAEKPNATDTPIEEIGDSQNTEPSVNSGFDPDKFREAQEMIKYMTLVSAAERQESKARKKNKTSALLTSRLTGLALRNRRGYSRVRTENVTGV.

The signal sequence occupies residues 1–71 (MSPCGYYSKW…FSMFVTAVVS (71 aa)). Residues 72 to 786 (VSPSSFYESL…HGFTTFLSNP (715 aa)) are Virion surface-facing. Intrachain disulfides connect C122–C584, C139–C540, C213–C277, C369–C417, and C608–C645. N147 is a glycosylation site (N-linked (GlcNAc...) asparagine; by host). Residues 179–185 (AWAGSSY) are involved in fusion and/or binding to host membrane. N-linked (GlcNAc...) asparagine; by host glycosylation occurs at N257. The involved in fusion and/or binding to host membrane stretch occupies residues 264-271 (GTPGTYRT). Residues N435, N503, N620, and N686 are each glycosylated (N-linked (GlcNAc...) asparagine; by host). Hydrophobic membrane proximal region stretches follow at residues 731–784 (IDKV…TFLS) and 764–784 (VVLGATGALLSTVHGFTTFLS). The chain crosses the membrane as a helical span at residues 787–807 (FGALAVGLLVLAGLVAAFFAY). Residues 808-931 (RYVLKLKTSP…RVRTENVTGV (124 aa)) are Intravirion-facing. A Golgi targeting motif is present at residues 881–884 (YMTL). Positions 920–923 (YSRV) match the Internalization motif motif.

This sequence belongs to the herpesviridae glycoprotein B family. In terms of assembly, homotrimer; disulfide-linked. Binds to heparan sulfate proteoglycans. Interacts with gH/gL heterodimer. Post-translationally, a proteolytic cleavage by host furin generates two subunits that remain linked by disulfide bonds.

The protein resides in the virion membrane. The protein localises to the host cell membrane. Its subcellular location is the host endosome membrane. It localises to the host Golgi apparatus membrane. Envelope glycoprotein that forms spikes at the surface of virion envelope. Essential for the initial attachment to heparan sulfate moieties of the host cell surface proteoglycans. Involved in fusion of viral and cellular membranes leading to virus entry into the host cell. Following initial binding to its host receptors, membrane fusion is mediated by the fusion machinery composed at least of gB and the heterodimer gH/gL. May be involved in the fusion between the virion envelope and the outer nuclear membrane during virion egress. The protein is Envelope glycoprotein B of Varicella-zoster virus (strain Oka vaccine) (HHV-3).